The sequence spans 215 residues: Adenylate kinase (215 aa).

10-15 (GAGKGT) serves as a coordination point for ATP. The NMP stretch occupies residues 30 to 59 (STGDMFRAAIKDQTPLGQEAKSYMDKGELV). AMP contacts are provided by residues threonine 31, arginine 36, 57-59 (ELV), 85-88 (GFPR), and glutamine 92. The interval 126–163 (GRRICPTCGATYHVIYNPPKVEGVCDIDGSALVQREDD) is LID. Arginine 127 lines the ATP pocket. Residues cysteine 130 and cysteine 133 each coordinate Zn(2+). 136 to 137 (TY) is a binding site for ATP. Positions 150 and 153 each coordinate Zn(2+). Arginine 160 and arginine 171 together coordinate AMP. Arginine 199 is an ATP binding site.

Belongs to the adenylate kinase family. In terms of assembly, monomer.

Its subcellular location is the cytoplasm. It carries out the reaction AMP + ATP = 2 ADP. The protein operates within purine metabolism; AMP biosynthesis via salvage pathway; AMP from ADP: step 1/1. Functionally, catalyzes the reversible transfer of the terminal phosphate group between ATP and AMP. Plays an important role in cellular energy homeostasis and in adenine nucleotide metabolism. The sequence is that of Adenylate kinase from Exiguobacterium sibiricum (strain DSM 17290 / CCUG 55495 / CIP 109462 / JCM 13490 / 255-15).